The following is a 207-amino-acid chain: C-type lectin domain family 2 member D (207 aa).

The Cytoplasmic segment spans residues 1-41 (MCVTKASLPMLSPTGSPQEVEVGKILQGKRHGTISPESCAK). Phosphoserine occurs at positions 7 and 12. Residues 42-62 (LYCYYGVIMVLTVAVIALSVA) traverse the membrane as a helical; Signal-anchor for type II membrane protein segment. Residues 63 to 207 (LSATKTEQIP…LHCQTPFFPS (145 aa)) are Extracellular-facing. Cysteine 80 and cysteine 91 are joined by a disulfide. Positions 87-202 (VENKCFYFSE…LNSYSLHCQT (116 aa)) constitute a C-type lectin domain. Asparagine 100 carries an N-linked (GlcNAc...) asparagine glycan.

In terms of assembly, homodimer; disulfide-linked. Post-translationally, N-glycosylated. Detected in fetal heart, brain, lung, chondrocytes, perichondrium and osteoblasts, and in adult splenocytes, thymocytes, lymph-node cells, osteoblasts, growth plate chondrocytes and skeletal muscle overlying the bone (at protein level). Ubiquitous. Detected in thymus, bone marrow, lung, gut, heart, skeletal muscle, ovary, spleen, ileum, liver and kidney.

The protein resides in the cell membrane. Its function is as follows. Receptor for KLRB1B that protects target cells against natural killer cell-mediated lysis. Inhibits osteoclast formation. Binds high molecular weight sulfated glycosaminoglycans. The polypeptide is C-type lectin domain family 2 member D (Clec2d) (Mus musculus (Mouse)).